Here is a 348-residue protein sequence, read N- to C-terminus: Protein pof5 (348 aa).

To yeast YDR306C. As to quaternary structure, interacts with skp1.

Its subcellular location is the mitochondrion. The sequence is that of Protein pof5 (pof5) from Schizosaccharomyces pombe (strain 972 / ATCC 24843) (Fission yeast).